The sequence spans 143 residues: Nucleoside diphosphate kinase (143 aa).

K11, F59, R87, T93, R104, and N114 together coordinate ATP. H117 acts as the Pros-phosphohistidine intermediate in catalysis.

It belongs to the NDK family. As to quaternary structure, homotetramer. Mg(2+) serves as cofactor.

The protein localises to the cytoplasm. It carries out the reaction a 2'-deoxyribonucleoside 5'-diphosphate + ATP = a 2'-deoxyribonucleoside 5'-triphosphate + ADP. The catalysed reaction is a ribonucleoside 5'-diphosphate + ATP = a ribonucleoside 5'-triphosphate + ADP. Its function is as follows. Major role in the synthesis of nucleoside triphosphates other than ATP. The ATP gamma phosphate is transferred to the NDP beta phosphate via a ping-pong mechanism, using a phosphorylated active-site intermediate. The sequence is that of Nucleoside diphosphate kinase from Acinetobacter baylyi (strain ATCC 33305 / BD413 / ADP1).